The sequence spans 389 residues: Formate-dependent phosphoribosylglycinamide formyltransferase (389 aa).

N(1)-(5-phospho-beta-D-ribosyl)glycinamide is bound by residues 12–13 and Glu72; that span reads EL. ATP-binding positions include Arg104, Lys145, 150–155, 185–188, and Glu193; these read SSGKGQ and EAFV. The ATP-grasp domain occupies 109-300; the sequence is DLASKELGLR…EFELHARAVL (192 aa). Residues Glu258 and Glu270 each coordinate Mg(2+). N(1)-(5-phospho-beta-D-ribosyl)glycinamide contacts are provided by residues Asp277, Lys348, and 355-356; that span reads RR.

The protein belongs to the PurK/PurT family. As to quaternary structure, homodimer.

It carries out the reaction N(1)-(5-phospho-beta-D-ribosyl)glycinamide + formate + ATP = N(2)-formyl-N(1)-(5-phospho-beta-D-ribosyl)glycinamide + ADP + phosphate + H(+). The protein operates within purine metabolism; IMP biosynthesis via de novo pathway; N(2)-formyl-N(1)-(5-phospho-D-ribosyl)glycinamide from N(1)-(5-phospho-D-ribosyl)glycinamide (formate route): step 1/1. Functionally, involved in the de novo purine biosynthesis. Catalyzes the transfer of formate to 5-phospho-ribosyl-glycinamide (GAR), producing 5-phospho-ribosyl-N-formylglycinamide (FGAR). Formate is provided by PurU via hydrolysis of 10-formyl-tetrahydrofolate. This is Formate-dependent phosphoribosylglycinamide formyltransferase from Chlorobium phaeobacteroides (strain DSM 266 / SMG 266 / 2430).